A 389-amino-acid polypeptide reads, in one-letter code: S-adenosylmethionine synthase (389 aa).

Histidine 15 is an ATP binding site. Aspartate 17 serves as a coordination point for Mg(2+). Glutamate 43 is a K(+) binding site. L-methionine contacts are provided by glutamate 56 and glutamine 99. The flexible loop stretch occupies residues 99–109 (QSPDIAQGVNE). ATP contacts are provided by residues 166-168 (DAK), 234-235 (RF), aspartate 243, 249-250 (RK), alanine 266, and lysine 270. Residue aspartate 243 coordinates L-methionine. Lysine 274 contributes to the L-methionine binding site.

The protein belongs to the AdoMet synthase family. As to quaternary structure, homotetramer; dimer of dimers. Mg(2+) is required as a cofactor. The cofactor is K(+).

The protein localises to the cytoplasm. The enzyme catalyses L-methionine + ATP + H2O = S-adenosyl-L-methionine + phosphate + diphosphate. Its pathway is amino-acid biosynthesis; S-adenosyl-L-methionine biosynthesis; S-adenosyl-L-methionine from L-methionine: step 1/1. Catalyzes the formation of S-adenosylmethionine (AdoMet) from methionine and ATP. The overall synthetic reaction is composed of two sequential steps, AdoMet formation and the subsequent tripolyphosphate hydrolysis which occurs prior to release of AdoMet from the enzyme. The protein is S-adenosylmethionine synthase of Chromobacterium violaceum (strain ATCC 12472 / DSM 30191 / JCM 1249 / CCUG 213 / NBRC 12614 / NCIMB 9131 / NCTC 9757 / MK).